The chain runs to 584 residues: Potassium-transporting ATPase potassium-binding subunit (584 aa).

10 helical membrane passes run 8–28 (FLVLIGVILALLLIPTGEFMF), 65–85 (SFAVAMMIFSVIGIVFVFILQ), 139–159 (VQNFMSAAVGMVVLVAFIYGF), 172–192 (VLLLRSIWILLPLSFVIALVL), 262–282 (FTDLVEIVAILLIPVSLCFMF), 292–312 (GIAILIAMMILFVPLLGLGIW), 398–418 (GLYCMLVFVIIAMFIAGLMVG), 440–460 (ILIPIFLILIGTAIAVSITAG), 507–527 (MFVGRYAIAIITLALAGAFVA), and 544–564 (LFIIWVVFTILIIGALSFLPA).

It belongs to the KdpA family. The system is composed of three essential subunits: KdpA, KdpB and KdpC.

Its subcellular location is the cell membrane. Part of the high-affinity ATP-driven potassium transport (or Kdp) system, which catalyzes the hydrolysis of ATP coupled with the electrogenic transport of potassium into the cytoplasm. This subunit binds the extracellular potassium ions and delivers the ions to the membrane domain of KdpB through an intramembrane tunnel. This Methanoregula boonei (strain DSM 21154 / JCM 14090 / 6A8) protein is Potassium-transporting ATPase potassium-binding subunit.